Consider the following 111-residue polypeptide: Large ribosomal subunit protein uL22 (111 aa).

This sequence belongs to the universal ribosomal protein uL22 family. As to quaternary structure, part of the 50S ribosomal subunit.

This protein binds specifically to 23S rRNA; its binding is stimulated by other ribosomal proteins, e.g. L4, L17, and L20. It is important during the early stages of 50S assembly. It makes multiple contacts with different domains of the 23S rRNA in the assembled 50S subunit and ribosome. In terms of biological role, the globular domain of the protein is located near the polypeptide exit tunnel on the outside of the subunit, while an extended beta-hairpin is found that lines the wall of the exit tunnel in the center of the 70S ribosome. This Chlamydia felis (strain Fe/C-56) (Chlamydophila felis) protein is Large ribosomal subunit protein uL22.